A 140-amino-acid chain; its full sequence is Cytochrome b (140 aa).

The chain crosses the membrane as a helical span at residues 38 to 58 (FFALHFLLPFVLAALVIMHLI). Heme b-binding residues include His42 and His56. A ubiquinone is bound at residue His61. Residues 85–105 (FVFKDLVTIFIFFIVLSIFVF) traverse the membrane as a helical segment.

It belongs to the cytochrome b family. As to quaternary structure, fungal cytochrome b-c1 complex contains 10 subunits; 3 respiratory subunits, 2 core proteins and 5 low-molecular weight proteins. Cytochrome b-c1 complex is a homodimer. Heme b is required as a cofactor.

It localises to the mitochondrion inner membrane. Its function is as follows. Component of the ubiquinol-cytochrome c reductase complex (complex III or cytochrome b-c1 complex) that is part of the mitochondrial respiratory chain. The b-c1 complex mediates electron transfer from ubiquinol to cytochrome c. Contributes to the generation of a proton gradient across the mitochondrial membrane that is then used for ATP synthesis. The polypeptide is Cytochrome b (cob) (Aspergillus terreus).